We begin with the raw amino-acid sequence, 349 residues long: DNA integrity scanning protein DisA (349 aa).

The DAC domain occupies 3–143 (KQDLMDIIVK…LKYRLKNFDE (141 aa)). Residues glycine 70, valine 88, and 101–105 (TRHRT) contribute to the ATP site.

Belongs to the DisA family. In terms of assembly, homooctamer. Mg(2+) serves as cofactor.

The catalysed reaction is 2 ATP = 3',3'-c-di-AMP + 2 diphosphate. Its function is as follows. Participates in a DNA-damage check-point. DisA forms globular foci that rapidly scan along the chromosomes searching for lesions. Functionally, also has diadenylate cyclase activity, catalyzing the condensation of 2 ATP molecules into cyclic di-AMP (c-di-AMP). c-di-AMP likely acts as a signaling molecule that may couple DNA integrity with a cellular process. This chain is DNA integrity scanning protein DisA, found in Fusobacterium nucleatum subsp. nucleatum (strain ATCC 25586 / DSM 15643 / BCRC 10681 / CIP 101130 / JCM 8532 / KCTC 2640 / LMG 13131 / VPI 4355).